The following is a 395-amino-acid chain: D-alanine--D-alanine ligase (395 aa).

The 220-residue stretch at 172–391 (KVVLDAAGIP…YTELITRLIE (220 aa)) folds into the ATP-grasp domain. 204–266 (DAGLTYPLFV…EQGIDGREIE (63 aa)) serves as a coordination point for ATP. 3 residues coordinate Mg(2+): D345, E358, and N360.

Belongs to the D-alanine--D-alanine ligase family. Mg(2+) serves as cofactor. The cofactor is Mn(2+).

The protein localises to the cytoplasm. It catalyses the reaction 2 D-alanine + ATP = D-alanyl-D-alanine + ADP + phosphate + H(+). It functions in the pathway cell wall biogenesis; peptidoglycan biosynthesis. Functionally, cell wall formation. In Bifidobacterium longum (strain DJO10A), this protein is D-alanine--D-alanine ligase.